The primary structure comprises 165 residues: Regulatory protein RecX (165 aa).

This sequence belongs to the RecX family.

It localises to the cytoplasm. Modulates RecA activity. This Cronobacter sakazakii (strain ATCC BAA-894) (Enterobacter sakazakii) protein is Regulatory protein RecX.